Reading from the N-terminus, the 135-residue chain is Protein PsiE homolog (135 aa).

4 helical membrane-spanning segments follow: residues 14–34 (LQTI…IFLV), 54–74 (YQLI…ALIV), 82–102 (HFPL…LIIV), and 107–127 (PSDT…LYLA).

The protein belongs to the PsiE family.

The protein resides in the cell inner membrane. The chain is Protein PsiE homolog from Pectobacterium atrosepticum (strain SCRI 1043 / ATCC BAA-672) (Erwinia carotovora subsp. atroseptica).